We begin with the raw amino-acid sequence, 407 residues long: Putative aspartate aminotransferase, cytoplasmic 2 (407 aa).

The residue at position 249 (lysine 249) is an N6-(pyridoxal phosphate)lysine.

It belongs to the class-I pyridoxal-phosphate-dependent aminotransferase family. In terms of assembly, homodimer. Pyridoxal 5'-phosphate serves as cofactor.

The protein resides in the cytoplasm. It catalyses the reaction L-aspartate + 2-oxoglutarate = oxaloacetate + L-glutamate. This chain is Putative aspartate aminotransferase, cytoplasmic 2 (GOT1L1), found in Bos taurus (Bovine).